The sequence spans 266 residues: Signal peptidase I (266 aa).

Over 1–20 (MQTDNTKSNTNKTAKQEWWS) the chain is Cytoplasmic. A helical membrane pass occupies residues 21–41 (CAFVICIALLIRILIMEPFTV). The Periplasmic segment spans residues 42-266 (PTGSMKATIL…IFRNLYNTDE (225 aa)). Active-site residues include Ser-45 and Lys-108.

Belongs to the peptidase S26 family.

The protein localises to the cell inner membrane. It carries out the reaction Cleavage of hydrophobic, N-terminal signal or leader sequences from secreted and periplasmic proteins.. In Rickettsia akari (strain Hartford), this protein is Signal peptidase I (lepB).